The primary structure comprises 416 residues: MFSKSVTLAQYDPDLAAAIAQEDQRQQDHVELIASENYVSCAVMEAQGSQLTNKYAEGYPGKRYYGGCEYVDIVEQLAIDRVKKLFGAQYANVQPHSGSQANQAVYASVLKPGDTILGMSLAHGGHLTHGASVNISGKLYNAVTYGLDENEVLDYAEVERLALEHKPKMIVAGASAYALQIDWAKFREIADKVGAYLFVDMAHYAGLVAGGEYPNPVPFCDFVTTTTHKTLRGPRGGVILCRDNTHEKALNSSIFPSLQGGPLMHVIAAKAVAFKEALQPEFKQYAKQVKINAAAMAEELVKRGLRIVSGRTESHVFLVDLQPMKITGKAAEAALGKAHITVNKNAIPNDPEKPFVTSGIRIGSAAMTTRGFNEADARVLANLVADVLSNPEDEANLAKVREQVTALCNKYPVYGA.

(6S)-5,6,7,8-tetrahydrofolate-binding positions include leucine 121 and 125–127; that span reads GHL. Lysine 229 bears the N6-(pyridoxal phosphate)lysine mark.

The protein belongs to the SHMT family. As to quaternary structure, homodimer. Pyridoxal 5'-phosphate is required as a cofactor.

The protein resides in the cytoplasm. It catalyses the reaction (6R)-5,10-methylene-5,6,7,8-tetrahydrofolate + glycine + H2O = (6S)-5,6,7,8-tetrahydrofolate + L-serine. It functions in the pathway one-carbon metabolism; tetrahydrofolate interconversion. Its pathway is amino-acid biosynthesis; glycine biosynthesis; glycine from L-serine: step 1/1. In terms of biological role, catalyzes the reversible interconversion of serine and glycine with tetrahydrofolate (THF) serving as the one-carbon carrier. This reaction serves as the major source of one-carbon groups required for the biosynthesis of purines, thymidylate, methionine, and other important biomolecules. Also exhibits THF-independent aldolase activity toward beta-hydroxyamino acids, producing glycine and aldehydes, via a retro-aldol mechanism. The protein is Serine hydroxymethyltransferase of Neisseria meningitidis serogroup A / serotype 4A (strain DSM 15465 / Z2491).